Consider the following 474-residue polypeptide: Methylenetetrahydrofolate--tRNA-(uracil-5-)-methyltransferase TrmFO (474 aa).

FAD is bound at residue 15-20 (GAGLAG). Positions 453–474 (PLLPTAPDTTGAAGEETTQAES) are disordered.

The protein belongs to the MnmG family. TrmFO subfamily. The cofactor is FAD.

It is found in the cytoplasm. It catalyses the reaction uridine(54) in tRNA + (6R)-5,10-methylene-5,6,7,8-tetrahydrofolate + NADH + H(+) = 5-methyluridine(54) in tRNA + (6S)-5,6,7,8-tetrahydrofolate + NAD(+). The catalysed reaction is uridine(54) in tRNA + (6R)-5,10-methylene-5,6,7,8-tetrahydrofolate + NADPH + H(+) = 5-methyluridine(54) in tRNA + (6S)-5,6,7,8-tetrahydrofolate + NADP(+). Catalyzes the folate-dependent formation of 5-methyl-uridine at position 54 (M-5-U54) in all tRNAs. This is Methylenetetrahydrofolate--tRNA-(uracil-5-)-methyltransferase TrmFO from Nitratidesulfovibrio vulgaris (strain ATCC 29579 / DSM 644 / CCUG 34227 / NCIMB 8303 / VKM B-1760 / Hildenborough) (Desulfovibrio vulgaris).